The sequence spans 249 residues: CDP-diacylglycerol pyrophosphatase (249 aa).

A helical transmembrane segment spans residues 7 to 27; that stretch reads FLLAVVIVAAVAGIGYWKLAA.

Belongs to the Cdh family.

It is found in the cell inner membrane. The enzyme catalyses a CDP-1,2-diacyl-sn-glycerol + H2O = a 1,2-diacyl-sn-glycero-3-phosphate + CMP + 2 H(+). The protein operates within phospholipid metabolism; CDP-diacylglycerol degradation; phosphatidate from CDP-diacylglycerol: step 1/1. This chain is CDP-diacylglycerol pyrophosphatase, found in Citrobacter koseri (strain ATCC BAA-895 / CDC 4225-83 / SGSC4696).